Here is a 136-residue protein sequence, read N- to C-terminus: MRASMVRRMAAAASSSASSSLRPAPLALLPPIPLYRRLLRAHRKHLPAEMRLLGDEYLKSEFRAHRNIDNPAHLIGFLTEWQLYAQQVEGESWLGEKIDQAKVEKLSEQQVGQLYELMMAIKSRREGGEGEGQESP.

The transit peptide at 1-24 directs the protein to the mitochondrion; sequence MRASMVRRMAAAASSSASSSLRPA.

It belongs to the complex I LYR family. SDHAF3 subfamily. Interacts with the iron-sulfur protein subunit within the SDH catalytic dimer.

It localises to the mitochondrion matrix. Plays an essential role in the assembly of succinate dehydrogenase (SDH), an enzyme complex (also referred to as respiratory complex II) that is a component of both the tricarboxylic acid (TCA) cycle and the mitochondrial electron transport chain, and which couples the oxidation of succinate to fumarate with the reduction of ubiquinone (coenzyme Q) to ubiquinol. Promotes maturation of the iron-sulfur protein subunit of the SDH catalytic dimer, protecting it from the deleterious effects of oxidants. May act together with SDHAF1. The sequence is that of Succinate dehydrogenase assembly factor 3, mitochondrial from Pyricularia oryzae (strain 70-15 / ATCC MYA-4617 / FGSC 8958) (Rice blast fungus).